We begin with the raw amino-acid sequence, 61 residues long: Large ribosomal subunit protein eL37 (61 aa).

Residues cysteine 19, cysteine 22, cysteine 34, and cysteine 37 each contribute to the Zn(2+) site. The C4-type zinc finger occupies cysteine 19–cysteine 37.

This sequence belongs to the eukaryotic ribosomal protein eL37 family. The cofactor is Zn(2+).

Functionally, binds to the 23S rRNA. This is Large ribosomal subunit protein eL37 from Sulfolobus acidocaldarius (strain ATCC 33909 / DSM 639 / JCM 8929 / NBRC 15157 / NCIMB 11770).